A 316-amino-acid chain; its full sequence is Glutathione synthetase (316 aa).

An ATP-grasp domain is found at Lys-125–Glu-310. Residue Trp-151 to Gly-207 coordinates ATP. Residues Glu-281 and Asn-283 each coordinate Mg(2+).

The protein belongs to the prokaryotic GSH synthase family. In terms of assembly, homotetramer. It depends on Mg(2+) as a cofactor. Mn(2+) serves as cofactor.

It carries out the reaction gamma-L-glutamyl-L-cysteine + glycine + ATP = glutathione + ADP + phosphate + H(+). It functions in the pathway sulfur metabolism; glutathione biosynthesis; glutathione from L-cysteine and L-glutamate: step 2/2. Inhibited by 7,8-dihydrofolate, methotrexate and trimethoprim. This is Glutathione synthetase (gshB) from Escherichia coli (strain K12).